Reading from the N-terminus, the 186-residue chain is ADP-ribosylation factor-like protein 6 (186 aa).

Gly2 carries N-myristoyl glycine lipidation. Residues 24–31 (GLDNSGKT), Thr50, 69–73 (DMSGQ), Gly72, 130–133 (NKMD), and Ala164 each bind GTP. Thr50 contacts Mg(2+).

Belongs to the small GTPase superfamily. Arf family. In terms of assembly, interacts with SEC61B, ARL6IP1, ARL6IP2, ARL6IP3, ARL6IP4 ARL6IP5 and ARL6IP6. Interacts (GTP-bound form) with the BBSome a complex that contains BBS1, BBS2, BBS4, BBS5, BBS7, BBS8/TTC8, BBS9 and BBIP10. Interacts (GTP-free form) with IFT27. Most abundant in brain and kidney. Expressed in heart and eye. Isoform 2 is expressed only in the retina.

It localises to the cell projection. The protein resides in the cilium membrane. It is found in the cytoplasm. Its subcellular location is the cytoskeleton. The protein localises to the cilium axoneme. It localises to the cilium basal body. Functionally, involved in membrane protein trafficking at the base of the ciliary organelle. Mediates recruitment onto plasma membrane of the BBSome complex which would constitute a coat complex required for sorting of specific membrane proteins to the primary cilia. Together with BBS1, is necessary for correct trafficking of PKD1 to primary cilia. Together with the BBSome complex and LTZL1, controls SMO ciliary trafficking and contributes to the sonic hedgehog (SHH) pathway regulation. May regulate cilia assembly and disassembly and subsequent ciliary signaling events such as the Wnt signaling cascade. Isoform 2 may be required for proper retinal function and organization. The sequence is that of ADP-ribosylation factor-like protein 6 (Arl6) from Mus musculus (Mouse).